Reading from the N-terminus, the 340-residue chain is uncharacterized protein (340 aa).

The N-terminal stretch at 1 to 25 (MLGIRAMLVMLDYYWIQLITNNDTR) is a signal peptide. Residues 26–225 (SNNTDTIFVS…RRYMYLFSVS (200 aa)) are Lumenal-facing. N-linked (GlcNAc...) asparagine; by host glycosylation is found at asparagine 27, asparagine 54, asparagine 57, asparagine 68, asparagine 72, asparagine 78, asparagine 83, asparagine 107, asparagine 118, asparagine 146, asparagine 173, and asparagine 180. Residues 226–246 (CAGITGTVSIILVSLSLLILI) form a helical membrane-spanning segment. At 247–340 (CYYRCGRLLI…PMHMVVCMPA (94 aa)) the chain is on the cytoplasmic side.

This sequence belongs to the HHV-5 UL20 protein family.

The protein localises to the host endoplasmic reticulum membrane. This is an uncharacterized protein from Human cytomegalovirus (strain AD169) (HHV-5).